A 398-amino-acid polypeptide reads, in one-letter code: Type II secretion system protein L (398 aa).

Over 1 to 248 (MNNHHTSSAA…RQPTPRRWRP (248 aa)) the chain is Cytoplasmic. Residues 249–265 (VIVAALALLLLWSSNCL) form a helical membrane-spanning segment. The Periplasmic segment spans residues 266–398 (HDHLMLGQQA…GRLTLEGNDA (133 aa)).

Belongs to the GSP L family. In terms of assembly, type II secretion system is composed of four main components: the outer membrane complex, the inner membrane complex, the cytoplasmic secretion ATPase and the periplasm-spanning pseudopilus. Forms homodimers. Interacts with PulM/GspM. Interacts with PulE/GspE and PulF/GspF.

It is found in the cell inner membrane. Inner membrane component of the type II secretion system required for the energy-dependent secretion of extracellular factors such as proteases and toxins from the periplasm. Plays a role in the complex assembly and recruits PulM resulting in a stable complex in the inner membrane. Provides thus a link between the energy-providing PulE protein in the cytoplasm and the rest of the T2SS machinery. The sequence is that of Type II secretion system protein L (pulL) from Klebsiella pneumoniae.